Reading from the N-terminus, the 159-residue chain is uncharacterized protein (159 aa).

The span at 1 to 13 (MTQPTRPSVTCDQ) shows a compositional bias: polar residues. A disordered region spans residues 1 to 57 (MTQPTRPSVTCDQGSSTIGGTAAQATTSSSATSGSNYQRDRLGRRPEIGVGGQPQIC). A compositionally biased stretch (low complexity) spans 14 to 35 (GSSTIGGTAAQATTSSSATSGS). A compositionally biased stretch (basic and acidic residues) spans 38-47 (QRDRLGRRPE).

This is an uncharacterized protein from Homo sapiens (Human).